We begin with the raw amino-acid sequence, 994 residues long: MKQKETKTSQIALVDGEKLSITDSFASLFTLDEEEENDSVDNEEIKLTKEKHEKLLLLFWLHCKFPNGLEWLHSSSDLLPEQVSEWFNFYQKYRFKRGRNFNLSARESVTPIVEEPIVPEEPDNLEGVSEETPLKETSLELSEEEIITSKSPIPSPETIHKNIDVEEKETIEPTTPVKEVETTAHAEEEKGPLTPDSEYAARQLTEELANKSSQEEGVDKQLRVVEATEKEHEEDGNEENVTVTKPVEVATDQVESKEVKKKEVSETTEPTAPPVTVAEVLEIEDKVPKVDEVEEVHSPEAKVTENDVENVQSGIDIEKTIQLLNNQEIPSEQQIISVDKATESPVQEVAVDVNEKPVDEIVEPSKLQMENKLPSEKSPTIDRTGVEAPLFELSVSMPLTLIPPSKFSEPVKPELSSEAWLLRTEMSPLHLRLKNAHKYVLSDNWSHAYREEIVRQSLHHLTVAKEKGIWSFRQPKRQNEMPRLKTHRDYVLDEMQWMSIDFSQERKWKIILAHRMANWVMDYHQASDKCTVCTPASLSKNKKPYMQENEHQKDSHEETFNEQIVSHFNLNDNNNNKVLSIPRDSLQFYNAVFSDDIFVTTNSEQIQNCVLNVPMYGPPTENNEYCEEISEKYPITPVSRFAYAKTKLKSTCAKASRKRLFNQLELSPPESFMEKKARSDENQLDGNKIKDDNQKLSSVGTFSVRPPYPPSSKDIRPEAPWLPEEDELLLLLLRRYSFNWEFVASRLTPPGLYIPLAEKRTAWDCFERWIQVDPRAANVQLTGSHARLAQQKLDESLRHSDKVSQHLSLRDEGTPNHLIKHNSYFLLPTVSRHYRPITIFEAIRKILKKREFAKKPTMTKRAIAPSAASTEKLPPVPSPLELSRLKSEREAQIQQIQAQRNFAQLQSQNRALRPQNAAVAAGAQQHNQQLAAFQAVAASQNSSNNSSAGVSPIAGRMVPRLQPYAVSSSLKLTPEQIHQLQQRKQTVPTTERTQ.

Disordered regions lie at residues 122 to 275 (PDNL…APPV) and 288 to 308 (PKVD…ENDV). Basic and acidic residues-rich tracts occupy residues 158–171 (TIHK…KETI), 178–191 (KEVE…EEKG), 204–233 (LTEE…KEHE), 254–265 (VESKEVKKKEVS), and 288–305 (PKVD…KVTE). Phosphoserine is present on residues Ser-298 and Ser-378. One can recognise an HSA domain in the interval 475 to 548 (PKRQNEMPRL…SKNKKPYMQE (74 aa)). The interval 671 to 693 (SFMEKKARSDENQLDGNKIKDDN) is disordered. Residues 672–693 (FMEKKARSDENQLDGNKIKDDN) are compositionally biased toward basic and acidic residues. Residues 713 to 773 (KDIRPEAPWL…DCFERWIQVD (61 aa)) form the Myb-like domain. Disordered regions lie at residues 857–880 (TMTK…PSPL) and 975–994 (EQIH…ERTQ). Residues 880–912 (LELSRLKSEREAQIQQIQAQRNFAQLQSQNRAL) are a coiled coil.

Belongs to the EAF1 family. Component of the NuA4 histone acetyltransferase complex.

Its subcellular location is the nucleus. Its function is as follows. Component of the NuA4 histone acetyltransferase complex which is involved in transcriptional activation of selected genes principally by acetylation of nucleosomal histone H4 and H2A. The NuA4 complex is also involved in DNA repair. This Schizosaccharomyces pombe (strain 972 / ATCC 24843) (Fission yeast) protein is Chromatin modification-related protein vid21 (vid21).